The primary structure comprises 37 residues: Large ribosomal subunit protein bL36c (37 aa).

It belongs to the bacterial ribosomal protein bL36 family.

The protein resides in the plastid. It is found in the chloroplast. This is Large ribosomal subunit protein bL36c from Huperzia lucidula (Shining clubmoss).